Here is a 480-residue protein sequence, read N- to C-terminus: Proline--tRNA ligase (480 aa).

Belongs to the class-II aminoacyl-tRNA synthetase family. ProS type 3 subfamily. Homodimer.

It localises to the cytoplasm. The enzyme catalyses tRNA(Pro) + L-proline + ATP = L-prolyl-tRNA(Pro) + AMP + diphosphate. Catalyzes the attachment of proline to tRNA(Pro) in a two-step reaction: proline is first activated by ATP to form Pro-AMP and then transferred to the acceptor end of tRNA(Pro). The polypeptide is Proline--tRNA ligase (Chloroflexus aurantiacus (strain ATCC 29364 / DSM 637 / Y-400-fl)).